The chain runs to 40 residues: Photosystem II reaction center protein J (40 aa).

A helical membrane pass occupies residues 8–28 (IPLCLIGTVAGIAVIGLVGVF).

The protein belongs to the PsbJ family. In terms of assembly, PSII is composed of 1 copy each of membrane proteins PsbA, PsbB, PsbC, PsbD, PsbE, PsbF, PsbH, PsbI, PsbJ, PsbK, PsbL, PsbM, PsbT, PsbX, PsbY, PsbZ, Psb30/Ycf12, at least 3 peripheral proteins of the oxygen-evolving complex and a large number of cofactors. It forms dimeric complexes.

The protein localises to the plastid. The protein resides in the chloroplast thylakoid membrane. Its function is as follows. One of the components of the core complex of photosystem II (PSII). PSII is a light-driven water:plastoquinone oxidoreductase that uses light energy to abstract electrons from H(2)O, generating O(2) and a proton gradient subsequently used for ATP formation. It consists of a core antenna complex that captures photons, and an electron transfer chain that converts photonic excitation into a charge separation. This is Photosystem II reaction center protein J from Triticum aestivum (Wheat).